A 223-amino-acid chain; its full sequence is Holliday junction branch migration complex subunit RuvA (223 aa).

The segment at 1–64 (MIGRIAGVIL…EDLLQLFGFP (64 aa)) is domain I. Positions 65 to 143 (TLLEKEWHRL…AVMALGGALT (79 aa)) are domain II. The segment at 144-169 (VDPGPLPEVELVEAAVPAPVPAKAAP) is flexible linker. The interval 170–223 (SSAQATADALSALGNLGYAPSEAASAVAEAAAREPAAPTAALIRAALRLLAPKE) is domain III.

Belongs to the RuvA family. In terms of assembly, homotetramer. Forms an RuvA(8)-RuvB(12)-Holliday junction (HJ) complex. HJ DNA is sandwiched between 2 RuvA tetramers; dsDNA enters through RuvA and exits via RuvB. An RuvB hexamer assembles on each DNA strand where it exits the tetramer. Each RuvB hexamer is contacted by two RuvA subunits (via domain III) on 2 adjacent RuvB subunits; this complex drives branch migration. In the full resolvosome a probable DNA-RuvA(4)-RuvB(12)-RuvC(2) complex forms which resolves the HJ.

Its subcellular location is the cytoplasm. The RuvA-RuvB-RuvC complex processes Holliday junction (HJ) DNA during genetic recombination and DNA repair, while the RuvA-RuvB complex plays an important role in the rescue of blocked DNA replication forks via replication fork reversal (RFR). RuvA specifically binds to HJ cruciform DNA, conferring on it an open structure. The RuvB hexamer acts as an ATP-dependent pump, pulling dsDNA into and through the RuvAB complex. HJ branch migration allows RuvC to scan DNA until it finds its consensus sequence, where it cleaves and resolves the cruciform DNA. The polypeptide is Holliday junction branch migration complex subunit RuvA (Paracoccus denitrificans (strain Pd 1222)).